The following is a 92-amino-acid chain: Large ribosomal subunit protein bL31 (92 aa).

A disordered region spans residues 66–92 (GMGSANPDVDAPAPKKAAKKSDAESDS). The span at 70-80 (ANPDVDAPAPK) shows a compositional bias: low complexity.

This sequence belongs to the bacterial ribosomal protein bL31 family. Type A subfamily. In terms of assembly, part of the 50S ribosomal subunit.

Binds the 23S rRNA. This chain is Large ribosomal subunit protein bL31, found in Synechococcus sp. (strain RCC307).